A 102-amino-acid chain; its full sequence is Large ribosomal subunit protein bL21 (102 aa).

Belongs to the bacterial ribosomal protein bL21 family. Part of the 50S ribosomal subunit. Contacts protein L20.

This protein binds to 23S rRNA in the presence of protein L20. This chain is Large ribosomal subunit protein bL21, found in Listeria innocua serovar 6a (strain ATCC BAA-680 / CLIP 11262).